The following is a 916-amino-acid chain: Translation initiation factor IF-2 (916 aa).

A disordered region spans residues 55–324 (EPKAVTPTSK…NHNANLKPVT (270 aa)). Residues 77-88 (AAEPKAAATKPA) are compositionally biased toward low complexity. Basic and acidic residues-rich tracts occupy residues 98–121 (FKAEREARAKAEAERRQNNGERRN), 129–161 (RQKDNRNHGSQDRRNDNRNNRNRQNDNRRDNRN), and 198–212 (RQSETRFHEAQEAKR). Low complexity predominate over residues 227–250 (KEQPTVEAAATAAPQAQPQTVEQV). Residues 264–281 (ARPDKSRDFSHENEDGPK) show a composition bias toward basic and acidic residues. Residues 291–304 (KQNQVRNQKNSNWN) show a composition bias toward low complexity. The span at 305 to 314 (KKNKKSKNNR) shows a compositional bias: basic residues. The region spanning 418–585 (ERAPVVTIMG…TVLLVAEIQE (168 aa)) is the tr-type G domain. The tract at residues 427-434 (GHVDHGKT) is G1. 427-434 (GHVDHGKT) provides a ligand contact to GTP. The interval 452–456 (GITQH) is G2. The interval 473–476 (DTPG) is G3. Residues 473–477 (DTPGH) and 527–530 (NKID) contribute to the GTP site. Positions 527–530 (NKID) are G4. The segment at 563 to 565 (SAK) is G5.

The protein belongs to the TRAFAC class translation factor GTPase superfamily. Classic translation factor GTPase family. IF-2 subfamily.

The protein localises to the cytoplasm. Its function is as follows. One of the essential components for the initiation of protein synthesis. Protects formylmethionyl-tRNA from spontaneous hydrolysis and promotes its binding to the 30S ribosomal subunits. Also involved in the hydrolysis of GTP during the formation of the 70S ribosomal complex. In Streptococcus mutans serotype c (strain ATCC 700610 / UA159), this protein is Translation initiation factor IF-2.